Consider the following 3567-residue polypeptide: Sushi, von Willebrand factor type A, EGF and pentraxin domain-containing protein 1 (3567 aa).

The first 17 residues, 1–17, serve as a signal peptide directing secretion; the sequence is MWSRLAFCCWALALVSG. Positions 84–265 constitute a VWFA domain; it reads ELVFLVDESS…LARRALHEDL (182 aa). Asn187 carries an N-linked (GlcNAc...) asparagine glycan. 3 Sushi domains span residues 377 to 436, 437 to 496, and 497 to 561; these read VHCP…FCRV, RTCP…RCVE, and RHCA…VCKD. 6 disulfides stabilise this stretch: Cys379–Cys421, Cys407–Cys434, Cys439–Cys481, Cys467–Cys494, Cys499–Cys544, and Cys530–Cys559. HYR domains are found at residues 560–644 and 645–724; these read KDVE…KVID and VEPP…VIKG. One can recognise a Sushi 4 domain in the interval 725-789; sequence SPCEVPFTPV…YSTEWPDCAI (65 aa). 20 disulfide bridges follow: Cys727–Cys769, Cys753–Cys787, Cys1196–Cys1207, Cys1201–Cys1216, Cys1218–Cys1227, Cys1234–Cys1245, Cys1239–Cys1254, Cys1256–Cys1265, Cys1272–Cys1283, Cys1277–Cys1292, Cys1294–Cys1303, Cys1310–Cys1321, Cys1315–Cys1330, Cys1332–Cys1341, Cys1348–Cys1359, Cys1353–Cys1368, Cys1370–Cys1379, Cys1386–Cys1397, Cys1391–Cys1406, and Cys1408–Cys1417. The 37-residue stretch at 1192 to 1228 folds into the EGF-like 1 domain; the sequence is VFHECFLNPCHNSGTCQQLGRGYVCLCPPGYTGLKCE. Residues 1230 to 1266 form the EGF-like 2; calcium-binding domain; sequence DIDECSSLPCLNGGICRDQVGGFTCECSLGYSGQICE. Positions 1268–1304 constitute an EGF-like 3; calcium-binding domain; it reads NINECISSPCLNKGTCTDGLASYRCTCVKGYMGVHCE. The EGF-like 4; calcium-binding domain occupies 1306-1342; the sequence is DVNECQSSPCLNNAVCKDQVGGFSCKCPPGFLGTRCE. Residues 1344–1380 form the EGF-like 5; calcium-binding domain; the sequence is NVDECLSQPCQNGATCKDGANSFRCQCPAGFTGTHCE. The EGF-like 6; calcium-binding domain maps to 1382-1418; the sequence is NINECQSNPCRNQATCVDELNSYSCKCQPGFSGHRCE. Positions 1423–1627 constitute a Pentraxin (PTX) domain; it reads SGFNLDFEVS…VKVDSSSMFC (205 aa). Sushi domains lie at 1628 to 1686 and 1687 to 1744; these read SDCP…HCER and IRCG…SCLD. 35 cysteine pairs are disulfide-bonded: Cys1630/Cys1671, Cys1657/Cys1684, Cys1689/Cys1729, Cys1715/Cys1742, Cys1748/Cys1760, Cys1754/Cys1769, Cys1771/Cys1782, Cys1788/Cys1828, Cys1814/Cys1841, Cys1846/Cys1886, Cys1872/Cys1899, Cys1904/Cys1944, Cys1930/Cys1957, Cys1962/Cys2002, Cys1988/Cys2015, Cys2020/Cys2060, Cys2046/Cys2077, Cys2082/Cys2125, Cys2111/Cys2140, Cys2145/Cys2185, Cys2171/Cys2198, Cys2203/Cys2244, Cys2230/Cys2258, Cys2263/Cys2303, Cys2289/Cys2317, Cys2322/Cys2362, Cys2348/Cys2375, Cys2380/Cys2421, Cys2407/Cys2434, Cys2439/Cys2479, Cys2465/Cys2492, Cys2497/Cys2537, Cys2523/Cys2550, Cys2555/Cys2595, and Cys2581/Cys2607. One can recognise an EGF-like 7; calcium-binding domain in the interval 1744 to 1783; sequence DVDECAVGSDCSEHASCLNTNGSYVCSCNPPYTGDGKNCA. Sushi domains follow at residues 1780–1843, 1844–1901, 1902–1959, 1960–2017, 2018–2079, 2080–2142, 2143–2200, 2201–2260, 2261–2319, 2320–2377, 2378–2436, 2437–2494, 2495–2552, and 2553–2609; these read KNCA…SCEA, ISCG…VCEL, VKCS…SCQL, VSCG…QCLA, VSCD…RCIA, HFCE…QCIP, VRCG…TCHP, VSCN…SCTP, LNCG…KCVP, TKCA…ICKM, VLCP…ECVP, VECP…MCKP, IECP…SCDA, and IHCS…TCVP. Positions 2638–2645 are important for the interaction with integrin ITGA9:ITGB1; it reads DMMEVPYL. 14 consecutive Sushi domains span residues 2660 to 2711, 2712 to 2769, 2770 to 2827, 2828 to 2885, 2886 to 2943, 2944 to 3001, 3002 to 3057, 3058 to 3115, 3116 to 3174, 3175 to 3234, 3235 to 3292, 3293 to 3350, 3351 to 3409, and 3410 to 3466; these read NTKE…SCIS, IECD…RCEA, ISCS…MCIP, VDCG…SCMP, VRCP…VCKP, ATCG…SCLP, CRCS…LCEH, AQCG…TCEP, LSCG…TCSP, KKCP…SCIP, VVCG…VCRE, NRCE…LCKP, NPCP…RCEK, and ISCG…VCRA. Intrachain disulfides connect Cys2682–Cys2709, Cys2714–Cys2754, Cys2740–Cys2767, Cys2772–Cys2812, Cys2798–Cys2825, Cys2830–Cys2870, Cys2856–Cys2883, Cys2888–Cys2928, Cys2914–Cys2941, Cys2946–Cys2986, Cys2972–Cys2999, Cys3004–Cys3043, Cys3029–Cys3055, Cys3060–Cys3100, Cys3086–Cys3113, Cys3118–Cys3159, Cys3144–Cys3172, Cys3177–Cys3217, Cys3203–Cys3232, Cys3237–Cys3277, Cys3263–Cys3290, Cys3295–Cys3335, Cys3321–Cys3348, Cys3353–Cys3394, Cys3380–Cys3407, Cys3412–Cys3452, Cys3438–Cys3464, Cys3500–Cys3510, Cys3504–Cys3516, Cys3518–Cys3527, Cys3532–Cys3542, Cys3536–Cys3548, and Cys3550–Cys3559. 2 EGF-like domains span residues 3496–3528 and 3529–3560; these read EEPI…SRCH and TATC…HDCS.

Interacts (via Sushi domain 21) with ITGA9:ITGB1; thereby inhibits Ca(2+) intracellular signaling and as a result represses vasocontraction. Interacts (via Sushi domain 21) with ITGA4:ITGB1; thereby inhibits Ca(2+) intracellular signaling and as a result represses vasocontraction. Interacts with ANGPT1 and ANGPT2. Interacts with PEAR1 (via extracellular domain). Interacts with HSPG2, TLN1, FN1, COPA, CCT2, IQGAP1, LAMC1 and NID1. Interacts (via C-terminus) with TIE1. Expressed in the media layer of the arterial wall (at protein level). Highly expressed in lung and placenta, weakly expressed in the kidney, heart, brain and spleen. Also expressed in bone and periosteum, but not in cartilage and skeletal muscle.

It localises to the secreted. It is found in the nucleus. The protein localises to the cytoplasm. Its subcellular location is the membrane. Functionally, required for morphological development, cell alignment and migration of lymphatic endothelial cells during embryonic development, potentially via modulation of ANGPT2-TIE1 signaling and subsequent activation of FOXC2 transcription. Required for embryonic lymphatic vascular development, via mediating the correct formation of the first lymphovenous contact site and tight association of the lymphatic endothelium with the venous endothelium. Represses PRKCA-mediated L-type voltage-gated channel Ca(2+) influx and ROCK-mediated calcium sensitivity in vascular smooth muscle cells, via its interaction with integrins, thereby inhibiting vasocontraction. Promotes platelet activation, via its interaction with PEAR1 and subsequent activation of AKT/mTOR signaling. Plays a role in epidermal development and keratinocyte differentiation, independent of cell-cell adhesion. May play a role in initial cell attachment of stromal osteogenic cells. May promote myoblast cell adhesion when in the presence of integrin ITGA9:ITGB1. The chain is Sushi, von Willebrand factor type A, EGF and pentraxin domain-containing protein 1 (Svep1) from Mus musculus (Mouse).